The following is a 525-amino-acid chain: Lysine--tRNA ligase (525 aa).

Mg(2+)-binding residues include glutamate 430 and glutamate 437.

Belongs to the class-II aminoacyl-tRNA synthetase family. In terms of assembly, homodimer. It depends on Mg(2+) as a cofactor.

It is found in the cytoplasm. The enzyme catalyses tRNA(Lys) + L-lysine + ATP = L-lysyl-tRNA(Lys) + AMP + diphosphate. The polypeptide is Lysine--tRNA ligase (Chlamydia caviae (strain ATCC VR-813 / DSM 19441 / 03DC25 / GPIC) (Chlamydophila caviae)).